A 223-amino-acid polypeptide reads, in one-letter code: Ribonuclease 3 (223 aa).

The RNase III domain occupies 4-127 (LENLQKLLGY…VMGAVYLEAG (124 aa)). E40 lines the Mg(2+) pocket. D44 is a catalytic residue. Residues D113 and E116 each contribute to the Mg(2+) site. E116 is a catalytic residue. The region spanning 154 to 223 (DYKTALQEIT…AKIALEKMKK (70 aa)) is the DRBM domain.

It belongs to the ribonuclease III family. Homodimer. The cofactor is Mg(2+).

It localises to the cytoplasm. The enzyme catalyses Endonucleolytic cleavage to 5'-phosphomonoester.. Digests double-stranded RNA. Involved in the processing of primary rRNA transcript to yield the immediate precursors to the large and small rRNAs (23S and 16S). Processes some mRNAs, and tRNAs when they are encoded in the rRNA operon. Processes pre-crRNA and tracrRNA of type II CRISPR loci if present in the organism. This is Ribonuclease 3 from Campylobacter curvus (strain 525.92).